The following is a 910-amino-acid chain: Short transient receptor potential channel 3 (910 aa).

Positions 1-93 are disordered; that stretch reads MSTKVKKCRE…VRGPAFMFGA (93 aa). Over 1-448 the chain is Cytoplasmic; it reads MSTKVKKCRE…KILRSPFMKF (448 aa). Over residues 19 to 29 the composition is skewed to acidic residues; the sequence is PEEEEDGEAEG. Residues 48–58 show a composition bias toward pro residues; it reads PPCPRAPPSPG. The span at 59–68 shows a compositional bias: low complexity; that stretch reads PDASSEGSPS. ANK repeat units lie at residues 100-129, 135-164, 166-192, and 221-250; these read AEEE…TLNV, MGQN…LARI, DALL…FAAS, and PDIT…RIER. E147 is a Ca(2+) binding site. A helical transmembrane segment spans residues 449–466; the sequence is VAHAASFIIFLGLLVFNA. The Extracellular segment spans residues 467 to 497; sequence SDRFEGITTLPNITVIDYPKQIFRVKTTQFT. N478 carries N-linked (GlcNAc...) asparagine glycosylation. A helical membrane pass occupies residues 498–516; sequence WTEMLIMVWVLGMMWSECK. 3 residues coordinate Ca(2+): E514, E517, and N532. Topologically, residues 517 to 529 are cytoplasmic; it reads ELWLEGPREYIVQ. The chain crosses the membrane as a helical span at residues 530–551; that stretch reads LWNVLDFGMLSIFIAAFTARFL. The Extracellular segment spans residues 552-595; sequence AFLQATKAQQYVDSHVQESDLSEVTLPPEVQYFTYARDKWLPSD. The chain crosses the membrane as a helical span at residues 596–619; it reads PQIISEGLYAIAVVLSFSRIAYIL. Residues 620–638 lie on the Cytoplasmic side of the membrane; that stretch reads PANESFGPLQISLGRTVKD. The stretch at 623-652 is one ANK 5 repeat; sequence ESFGPLQISLGRTVKDIFKFMVLFIMVFLA. The chain crosses the membrane as a helical span at residues 639 to 662; the sequence is IFKFMVLFIMVFLAFMIGMFILYS. Residues 663–702 are Extracellular-facing; the sequence is YYLGAKVNPAFTTVEESFKTLFWSIFGLSEVTSVVLKYDH. A helical transmembrane segment spans residues 703-728; that stretch reads KFIENIGYVLYGIYNVTMVVVLLNML. At 729–910 the chain is on the cytoplasmic side; that stretch reads IAMINSSYQE…KLNPSVLRCE (182 aa). E860, E863, E865, and D872 together coordinate Ca(2+).

This sequence belongs to the transient receptor (TC 1.A.4) family. STrpC subfamily. TRPC3 sub-subfamily. Homotetramer. Interacts with ITPR1, ITPR3, MX1 and RNF24. Interacts with JPH2; the interaction is involved in maintaining Ca(2+) homeostasis in skeletal muscle and is mediated by JPH2 'Ser-165' phosphorylation. Abundantly expressed in brain. Concentrated in cerebellar Purkinje cells and sparsely localized in cerebellar granule lyer, pontine nuclei and thalamus. Lower levels detected in other tissues.

The protein resides in the cell membrane. It carries out the reaction Ca(2+)(in) = Ca(2+)(out). With respect to regulation, activated by diacylglycerol (DAG) in a membrane-delimited fashion, independently of protein kinase C. Activated by inositol 1,4,5-triphosphate receptors (ITPR) with bound IP3. May be activated by internal calcium store depletion. Inhibited by intracellular Ca(2+). In terms of biological role, forms a receptor-activated non-selective calcium permeant cation channel. May be operated by a phosphatidylinositol second messenger system activated by receptor tyrosine kinases or G-protein coupled receptors. The chain is Short transient receptor potential channel 3 (Trpc3) from Mus musculus (Mouse).